The following is an 879-amino-acid chain: DNA mismatch repair protein MutS (879 aa).

Residue 629 to 636 (GPNMAGKS) participates in ATP binding. Positions 824-845 (VGGQPQKELSEHKPHQPSLFAP) are disordered.

The protein belongs to the DNA mismatch repair MutS family.

Its function is as follows. This protein is involved in the repair of mismatches in DNA. It is possible that it carries out the mismatch recognition step. This protein has a weak ATPase activity. The chain is DNA mismatch repair protein MutS from Desulfotalea psychrophila (strain LSv54 / DSM 12343).